We begin with the raw amino-acid sequence, 454 residues long: Death-associated protein kinase 3 (454 aa).

The Protein kinase domain occupies 13 to 275 (YEMGEELGSG…IAQSLEHSWI (263 aa)). Residues 19-27 (LGSGQFAIV) and lysine 42 each bind ATP. Residue serine 50 is modified to Phosphoserine; by autocatalysis. Residues glutamate 94 and valine 96 each coordinate pyridone 6. Aspartate 139 acts as the Proton acceptor in catalysis. The segment at 161–204 (DFGIAHKIEAGNEFKNIFGTPEFVAPEIVNYEPLGLEADMWSIG) is activation segment. Residues threonine 180 and threonine 225 each carry the phosphothreonine modification. Phosphothreonine; by autocatalysis and ROCK1 is present on threonine 265. The residue at position 299 (threonine 299) is a Phosphothreonine; by autocatalysis, DAPK1 and ROCK1. Position 306 is a phosphothreonine; by autocatalysis (threonine 306). At serine 309 the chain carries Phosphoserine; by DAPK1. At serine 311 the chain carries Phosphoserine; by autocatalysis and DAPK1. Phosphoserine; by DAPK1 is present on residues serine 312, serine 318, and serine 326. A leucine-zipper region spans residues 427 to 441 (VASEMRFVQDLVRAL).

It belongs to the protein kinase superfamily. CAMK Ser/Thr protein kinase family. DAP kinase subfamily. Homooligomer in its kinase-active form (homotrimers and homodimers are reported); monomeric in its kinase-inactive form. Homodimerization is required for activation segment autophosphorylation. Isoform 1 and isoform 2 interact with myosin and PPP1R12A; interaction of isoform 1 with PPP1R12A is inhibited by RhoA dominant negative form. Interacts with NLK, DAXX, STAT3, RHOD (GTP-bound form) and TCP10L. Interacts with PAWR; the interaction is reported conflictingly: according to PubMed:17953487 does not interact with PAWR. Interacts with ULK1; may be a substrate of ULK1. Interacts with LUZP1; the interaction is likely to occur throughout the cell cycle and reduces the LUZP1-mediated suppression of MYL9 phosphorylation. Requires Mg(2+) as cofactor. The phosphorylation status is critical for kinase activity, oligomerization and intracellular localization. Phosphorylation at Thr-180, Thr-225 and Thr-265 is essential for activity. The phosphorylated form is localized in the cytoplasm promoted by phosphorylation at Thr-299; nuclear translocation or retention is maximal when it is not phosphorylated. Phosphorylation increases the trimeric form, and its dephosphorylation favors a kinase-inactive monomeric form. Both isoform 1 and isoform 2 can undergo autophosphorylation. As to expression, widely expressed. Isoform 1 and isoform 2 are expressed in the bladder smooth muscle.

It localises to the nucleus. Its subcellular location is the PML body. It is found in the cytoplasm. The protein localises to the cytoskeleton. The protein resides in the microtubule organizing center. It localises to the centrosome. Its subcellular location is the chromosome. It is found in the centromere. The protein localises to the spindle. The protein resides in the midbody. It carries out the reaction L-seryl-[protein] + ATP = O-phospho-L-seryl-[protein] + ADP + H(+). The catalysed reaction is L-threonyl-[protein] + ATP = O-phospho-L-threonyl-[protein] + ADP + H(+). Its activity is regulated as follows. A sequential activation is proposed: autophosphorylation at consensus sites is leading to dimerization of the catalytic domain stabilized by phosphorylation at Ser-50 and activation segment exchange (producing an active confirmation of both kinase modules in trans) followed by phosphorylation at Thr-180 in the activation segment and at other regulatory sites. Phosphorylation at Thr-180, Thr-225 and Thr-265 is essential for activity. Oligomerization is required for full enzymatic activity. Inhibited by pyridone-6 (K00225), a potent, ATP-competitive inhibitor. Functionally, serine/threonine kinase which is involved in the regulation of apoptosis, autophagy, transcription, translation and actin cytoskeleton reorganization. Involved in the regulation of smooth muscle contraction. Regulates both type I (caspase-dependent) apoptotic and type II (caspase-independent) autophagic cell deaths signal, depending on the cellular setting. Involved in regulation of starvation-induced autophagy. Regulates myosin phosphorylation in both smooth muscle and non-muscle cells. In smooth muscle, regulates myosin either directly by phosphorylating MYL12B and MYL9 or through inhibition of smooth muscle myosin phosphatase (SMPP1M) via phosphorylation of PPP1R12A; the inhibition of SMPP1M functions to enhance muscle responsiveness to Ca(2+) and promote a contractile state. Phosphorylates MYL12B in non-muscle cells leading to reorganization of actin cytoskeleton. Isoform 2 can phosphorylate myosin, PPP1R12A and MYL12B. Overexpression leads to condensation of actin stress fibers into thick bundles. Involved in actin filament focal adhesion dynamics. The function in both reorganization of actin cytoskeleton and focal adhesion dissolution is modulated by RhoD. Positively regulates canonical Wnt/beta-catenin signaling through interaction with NLK and TCF7L2. Phosphorylates RPL13A on 'Ser-77' upon interferon-gamma activation which is causing RPL13A release from the ribosome, RPL13A association with the GAIT complex and its subsequent involvement in transcript-selective translation inhibition. Enhances transcription from AR-responsive promoters in a hormone- and kinase-dependent manner. Involved in regulation of cell cycle progression and cell proliferation. May be a tumor suppressor. The sequence is that of Death-associated protein kinase 3 (DAPK3) from Homo sapiens (Human).